A 43-amino-acid polypeptide reads, in one-letter code: METATLIAISISGLLVSFTGYALYTAFGQPSQQLRDPFEEHGD.

The chain crosses the membrane as a helical span at residues 5 to 27 (TLIAISISGLLVSFTGYALYTAF).

It belongs to the PsbN family.

The protein resides in the plastid. The protein localises to the chloroplast thylakoid membrane. Its function is as follows. May play a role in photosystem I and II biogenesis. The protein is Protein PsbN of Phaseolus vulgaris (Kidney bean).